A 464-amino-acid polypeptide reads, in one-letter code: Phosphoglucosamine mutase (464 aa).

S112 acts as the Phosphoserine intermediate in catalysis. Residues S112, D252, D254, and D256 each coordinate Mg(2+). Position 112 is a phosphoserine (S112).

Belongs to the phosphohexose mutase family. The cofactor is Mg(2+). Post-translationally, activated by phosphorylation.

The catalysed reaction is alpha-D-glucosamine 1-phosphate = D-glucosamine 6-phosphate. Its function is as follows. Catalyzes the conversion of glucosamine-6-phosphate to glucosamine-1-phosphate. The protein is Phosphoglucosamine mutase of Synechococcus sp. (strain CC9902).